The primary structure comprises 479 residues: Pyruvate kinase (479 aa).

A substrate-binding site is contributed by R36. N38, S40, and D70 together coordinate K(+). 38-41 lines the ATP pocket; the sequence is NFSH. ATP-binding residues include R77 and K160. A Mg(2+)-binding site is contributed by E225. Substrate-binding residues include G251, D252, and T284. D252 provides a ligand contact to Mg(2+).

Belongs to the pyruvate kinase family. As to quaternary structure, homotetramer. It depends on Mg(2+) as a cofactor. Requires K(+) as cofactor.

The enzyme catalyses pyruvate + ATP = phosphoenolpyruvate + ADP + H(+). The protein operates within carbohydrate degradation; glycolysis; pyruvate from D-glyceraldehyde 3-phosphate: step 5/5. With respect to regulation, allosterically activated by AMP and by several sugar phosphates. Belongs to type II PK. In Buchnera aphidicola subsp. Baizongia pistaciae (strain Bp), this protein is Pyruvate kinase (pykA).